Here is a 382-residue protein sequence, read N- to C-terminus: Alkanesulfonate monooxygenase (382 aa).

It belongs to the SsuD family. As to quaternary structure, homotetramer.

The catalysed reaction is an alkanesulfonate + FMNH2 + O2 = an aldehyde + FMN + sulfite + H2O + 2 H(+). Functionally, catalyzes the desulfonation of aliphatic sulfonates. The protein is Alkanesulfonate monooxygenase of Serratia proteamaculans (strain 568).